We begin with the raw amino-acid sequence, 559 residues long: Potassium-transporting ATPase potassium-binding subunit (559 aa).

Transmembrane regions (helical) follow at residues 7-27, 63-83, 132-152, 170-190, 253-273, 283-303, 327-347, 356-376, 379-399, 416-436, 484-504, and 524-544; these read LLIA…GSGL, LLAL…LLFW, GLTV…FALI, LVRI…LFFI, MVQM…FGEA, LLWA…WAEV, FGVL…CGAV, ALGG…FGGV, GLYG…LMIG, MTAL…ALAM, LLAF…MAIA, and GALF…LTFI.

It belongs to the KdpA family. The system is composed of three essential subunits: KdpA, KdpB and KdpC.

The protein localises to the cell inner membrane. Functionally, part of the high-affinity ATP-driven potassium transport (or Kdp) system, which catalyzes the hydrolysis of ATP coupled with the electrogenic transport of potassium into the cytoplasm. This subunit binds the periplasmic potassium ions and delivers the ions to the membrane domain of KdpB through an intramembrane tunnel. This chain is Potassium-transporting ATPase potassium-binding subunit, found in Salmonella arizonae (strain ATCC BAA-731 / CDC346-86 / RSK2980).